A 1094-amino-acid polypeptide reads, in one-letter code: Protein transport protein Sec24C (1094 aa).

The interval 1–338 is disordered; that stretch reads MNVNQSVPPV…PIQVIEDDRN (338 aa). The segment covering 8-19 has biased composition (pro residues); sequence PPVPPFGQPQPI. Low complexity-rich tracts occupy residues 20 to 29 and 60 to 77; these read YPGYHQSSYG and SRAPPSSGAPPASTAQAP. Positions 90 to 101 are enriched in polar residues; sequence DVQNGPSSTVQM. The segment covering 123 to 132 has biased composition (pro residues); sequence VLQPYGPPPT. Composition is skewed to polar residues over residues 133 to 144, 165 to 175, 189 to 215, and 240 to 251; these read SAQVATQLSGMQ, SLASASGSFPN, PLSQAQGHPGIQTPQRSAPSQASSFTP, and SVSQPNHVSSPP. The residue at position 214 (threonine 214) is a Phosphothreonine. Residues 273–282 show a composition bias toward low complexity; that stretch reads PQQPGYQPQQ. Cysteine 425, cysteine 428, cysteine 447, and cysteine 450 together coordinate Zn(2+). The tract at residues 425–450 is zinc finger-like; sequence CNRCKAYMCPFMQFIEGGRRFQCCFC. The stretch at 962–1034 is one Gelsolin-like repeat; the sequence is TTEPPAVRAS…DNPLSKKVRG (73 aa).

It belongs to the SEC23/SEC24 family. SEC24 subfamily. COPII is composed of at least five proteins: the Sec23/24 complex, the Sec13/31 complex and Sar1. Interacts with TMED2 and TMED10. Interacts with GOSR2 (via IxM motif) and STX5 (via IxM motif); recruits GOSR2 and STX5 into COPII-coated vesicles. Interacts with DDHD1. Interacts with STING1; promoting STING1 translocation to the COPII vesicles. As to expression, ubiquitous.

It localises to the cytoplasmic vesicle. The protein localises to the COPII-coated vesicle membrane. It is found in the endoplasmic reticulum membrane. The protein resides in the cytoplasm. Its subcellular location is the cytosol. Its function is as follows. Component of the coat protein complex II (COPII) which promotes the formation of transport vesicles from the endoplasmic reticulum (ER). The coat has two main functions, the physical deformation of the endoplasmic reticulum membrane into vesicles and the selection of cargo molecules for their transport to the Golgi complex. Plays a central role in cargo selection within the COPII complex and together with SEC24D may have a different specificity compared to SEC24A and SEC24B. May more specifically package GPI-anchored proteins through the cargo receptor TMED10. May also be specific for IxM motif-containing cargos like the SNAREs GOSR2 and STX5. The chain is Protein transport protein Sec24C from Homo sapiens (Human).